A 189-amino-acid polypeptide reads, in one-letter code: Elongation factor P (189 aa).

This sequence belongs to the elongation factor P family.

Its subcellular location is the cytoplasm. Its pathway is protein biosynthesis; polypeptide chain elongation. Involved in peptide bond synthesis. Stimulates efficient translation and peptide-bond synthesis on native or reconstituted 70S ribosomes in vitro. Probably functions indirectly by altering the affinity of the ribosome for aminoacyl-tRNA, thus increasing their reactivity as acceptors for peptidyl transferase. This is Elongation factor P from Rhizobium johnstonii (strain DSM 114642 / LMG 32736 / 3841) (Rhizobium leguminosarum bv. viciae).